Reading from the N-terminus, the 313-residue chain is Ribosomal RNA small subunit methyltransferase H (313 aa).

Residues 31–33 (GGH), Asp-51, Phe-77, Asp-95, and Gln-102 contribute to the S-adenosyl-L-methionine site.

It belongs to the methyltransferase superfamily. RsmH family.

The protein resides in the cytoplasm. It catalyses the reaction cytidine(1402) in 16S rRNA + S-adenosyl-L-methionine = N(4)-methylcytidine(1402) in 16S rRNA + S-adenosyl-L-homocysteine + H(+). Specifically methylates the N4 position of cytidine in position 1402 (C1402) of 16S rRNA. This is Ribosomal RNA small subunit methyltransferase H from Xylella fastidiosa (strain M23).